The sequence spans 1200 residues: ATP-dependent helicase/deoxyribonuclease subunit B (1200 aa).

This sequence belongs to the helicase family. AddB/RexB type 2 subfamily. In terms of assembly, heterodimer of AddA and RexB. Mg(2+) is required as a cofactor.

Its function is as follows. The heterodimer acts as both an ATP-dependent DNA helicase and an ATP-dependent, dual-direction single-stranded exonuclease. Recognizes the chi site generating a DNA molecule suitable for the initiation of homologous recombination. This subunit has 5' -&gt; 3' nuclease activity but not helicase activity. The polypeptide is ATP-dependent helicase/deoxyribonuclease subunit B (Lactiplantibacillus plantarum (strain ATCC BAA-793 / NCIMB 8826 / WCFS1) (Lactobacillus plantarum)).